The primary structure comprises 341 residues: RNA 3'-terminal phosphate cyclase (341 aa).

ATP contacts are provided by residues Gln102 and 283–287 (HLADQ). His308 serves as the catalytic Tele-AMP-histidine intermediate.

Belongs to the RNA 3'-terminal cyclase family. Type 1 subfamily.

Its subcellular location is the cytoplasm. The catalysed reaction is a 3'-end 3'-phospho-ribonucleotide-RNA + ATP = a 3'-end 2',3'-cyclophospho-ribonucleotide-RNA + AMP + diphosphate. Functionally, catalyzes the conversion of 3'-phosphate to a 2',3'-cyclic phosphodiester at the end of RNA. The mechanism of action of the enzyme occurs in 3 steps: (A) adenylation of the enzyme by ATP; (B) transfer of adenylate to an RNA-N3'P to produce RNA-N3'PP5'A; (C) and attack of the adjacent 2'-hydroxyl on the 3'-phosphorus in the diester linkage to produce the cyclic end product. The biological role of this enzyme is unknown but it is likely to function in some aspects of cellular RNA processing. The polypeptide is RNA 3'-terminal phosphate cyclase (Pseudomonas aeruginosa (strain LESB58)).